Reading from the N-terminus, the 111-residue chain is Aquaporin-2 (111 aa).

The Cytoplasmic segment spans residues 1-6 (SIAFSR). Residues 7–27 (AVFSEFLATLLFVFFGLGSAL) form a helical membrane-spanning segment. At 28-37 (NWPSTVPIPT) the chain is on the extracellular side. Residues 38 to 56 (VLQISMAFGLAIGTLVQTL) traverse the membrane as a helical segment. Over 57–61 (GHISG) the chain is Cytoplasmic. The discontinuously helical intramembrane region spans 62–71 (AHINPAVTVA). An NPA 1 motif is present at residues 65-67 (NPA). Residues 72-82 (CLVGCHVSFLR) are Cytoplasmic-facing. The chain crosses the membrane as a helical span at residues 83-104 (ATFYVAAQLLGAVAGAALLHKL). Over 105–111 (TPEDIRG) the chain is Extracellular.

This sequence belongs to the MIP/aquaporin (TC 1.A.8) family. As to quaternary structure, homotetramer. Serine phosphorylation is necessary and sufficient for expression at the apical membrane. Endocytosis is not phosphorylation-dependent. Post-translationally, N-glycosylated.

The protein resides in the apical cell membrane. Its subcellular location is the basolateral cell membrane. It is found in the cell membrane. The protein localises to the cytoplasmic vesicle membrane. It localises to the golgi apparatus. The protein resides in the trans-Golgi network membrane. It carries out the reaction H2O(in) = H2O(out). It catalyses the reaction glycerol(in) = glycerol(out). In terms of biological role, forms a water-specific channel that provides the plasma membranes of renal collecting duct with high permeability to water, thereby permitting water to move in the direction of an osmotic gradient. Plays an essential role in renal water homeostasis. Could also be permeable to glycerol. The protein is Aquaporin-2 of Macroscelides proboscideus (Short-eared elephant shrew).